We begin with the raw amino-acid sequence, 6061 residues long: Intermembrane lipid transfer protein vps13B (6061 aa).

Positions 2–115 constitute a Chorein N-terminal domain; it reads FESLVADIIA…QLELKRKKLE (114 aa). Disordered regions lie at residues 590–623, 803–828, 1386–1414, 1604–1644, 2747–2784, 2950–2972, 3364–3401, 3855–3876, 4011–4068, 4107–4132, 4262–4297, 4321–4442, 4601–4631, 4753–4797, 4861–4882, 5003–5030, and 5372–5429; these read PKYKRHQENKENKENQENQENENKNEINNNNNNK, DIKNSDNNNNNISDNINNNNNINNKN, QQQQQQEEEQQQKEEEQHGGEFDLQNVSS, SSNN…GTLS, QTNQNNQKNRNPFKFYDQSGASNNNNDNDNDEYDEDQE, GLNNSFDLNNSGGGNNNNNNSST, LNRNSNSDSDNEENHNNNQNNQNNIDDDDGDGDDDDDD, QQQQPIINGDYGGIDSNNRNKK, QQQQ…FKNN, ELEKKKRERKENSKSKSLVAPDRPDE, NSSNNNNNNNNNGLSASTSNNLNNTMNDSNNNYNGR, SQSI…TSPG, TSSPSSSSNKVNNNYNNMDDEEDKKISKKSL, NNNN…TQEF, NAGGSSHYSSNGSNGSFSSISQ, LATKGKDNNKDNSNNNNNNNNNNNDGIE, and NINN…IGQD. A compositionally biased stretch (basic and acidic residues) spans 595 to 614; it reads HQENKENKENQENQENENKN. The span at 1395–1406 shows a compositional bias: basic and acidic residues; the sequence is QQQKEEEQHGGE. The segment covering 2747–2756 has biased composition (polar residues); the sequence is QTNQNNQKNR. Residues 2774–2784 are compositionally biased toward acidic residues; sequence NDNDEYDEDQE. Over residues 3388 to 3401 the composition is skewed to acidic residues; the sequence is IDDDDGDGDDDDDD. Basic and acidic residues predominate over residues 4015 to 4024; that stretch reads QEKEKEIEKE. The segment covering 4031–4040 has biased composition (low complexity); the sequence is LKNNNNISIN. Residues 4041–4057 are compositionally biased toward acidic residues; it reads DNDDDDDDDDNDNDENN. The span at 4058–4068 shows a compositional bias: low complexity; the sequence is NENYEFNFKNN. Residues 4107 to 4120 show a composition bias toward basic and acidic residues; sequence ELEKKKRERKENSK. Composition is skewed to low complexity over residues 4330–4383 and 4399–4429; these read TTTT…VGSN and NNNNNNNNNNNNNNNNNNNNNNNNNNNNNNN. A compositionally biased stretch (polar residues) spans 4430 to 4441; that stretch reads SNDNQVNFSTSP. Composition is skewed to low complexity over residues 4601–4617 and 4753–4784; these read TSSPSSSSNKVNNNYNN and NNNNNNNDVNNNNTNNNNNNNNNNNNNKSNEN. Residues 4785 to 4794 are compositionally biased toward polar residues; that stretch reads SQDQPPSIKT. Composition is skewed to low complexity over residues 5013–5030 and 5372–5384; these read DNSNNNNNNNNNNNDGIE and NINNNNNNLNNDN. Basic and acidic residues predominate over residues 5385 to 5409; the sequence is NKNKNNNDKNKNNDKNNKNNNDKNN. A compositionally biased stretch (low complexity) spans 5410–5421; that stretch reads NDNNNNNNNNNN.

Belongs to the VPS13 family.

Its subcellular location is the membrane. Its function is as follows. Mediates the transfer of lipids between membranes at organelle contact sites. The protein is Intermembrane lipid transfer protein vps13B (vps13B) of Dictyostelium discoideum (Social amoeba).